The sequence spans 394 residues: Tryptophan synthase beta chain (394 aa).

Position 90 is an N6-(pyridoxal phosphate)lysine (Lys-90).

It belongs to the TrpB family. In terms of assembly, tetramer of two alpha and two beta chains. Pyridoxal 5'-phosphate is required as a cofactor.

The catalysed reaction is (1S,2R)-1-C-(indol-3-yl)glycerol 3-phosphate + L-serine = D-glyceraldehyde 3-phosphate + L-tryptophan + H2O. Its pathway is amino-acid biosynthesis; L-tryptophan biosynthesis; L-tryptophan from chorismate: step 5/5. Functionally, the beta subunit is responsible for the synthesis of L-tryptophan from indole and L-serine. The sequence is that of Tryptophan synthase beta chain from Parabacteroides distasonis (strain ATCC 8503 / DSM 20701 / CIP 104284 / JCM 5825 / NCTC 11152).